Reading from the N-terminus, the 128-residue chain is CD59 glycoprotein (128 aa).

The signal sequence occupies residues 1–25 (MGIQGGSVLFGLLLVLAVFCHSGHS). Residues 26–108 (LQCYNCPNPT…QLENGGTSLS (83 aa)) enclose the UPAR/Ly6 domain. 3 disulfide bridges follow: Cys28–Cys51, Cys31–Cys38, and Cys44–Cys64. Residue Asn43 is glycosylated (N-linked (GlcNAc...) asparagine). Residue Lys66 is glycosylated (N-linked (Glc) (glycation) lysine). 2 cysteine pairs are disulfide-bonded: Cys70–Cys88 and Cys89–Cys94. O-linked (GalNAc...) threonine glycosylation is found at Thr76 and Thr77. Asn102 carries the GPI-anchor amidated asparagine lipid modification. Residues 103 to 128 (GGTSLSEKTVLLLVTPFLAAAWSLHP) constitute a propeptide, removed in mature form.

In terms of assembly, interacts with T-cell surface antigen CD2. N- and O-glycosylated. The N-glycosylation mainly consists of a family of biantennary complex-type structures with and without lactosamine extensions and outer arm fucose residues. Also significant amounts of triantennary complexes (22%). Variable sialylation also present in the Asn-43 oligosaccharide. The predominant O-glycans are mono-sialylated forms of the disaccharide, Gal-beta-1,3GalNAc, and their sites of attachment are probably on Thr-76 and Thr-77. The GPI-anchor of soluble urinary CD59 has no inositol-associated phospholipid, but is composed of seven different GPI-anchor variants of one or more monosaccharide units. Major variants contain sialic acid, mannose and glucosamine. Sialic acid linked to an N-acetylhexosamine-galactose arm is present in two variants. Post-translationally, glycated. Glycation is found in diabetic subjects, but only at minimal levels in nondiabetic subjects. Glycated CD59 lacks MAC-inhibitory function and confers to vascular complications of diabetes.

It is found in the cell membrane. It localises to the secreted. Potent inhibitor of the complement membrane attack complex (MAC) action, which protects human cells from damage during complement activation. Acts by binding to the beta-haipins of C8 (C8A and C8B) components of the assembling MAC, forming an intermolecular beta-sheet that prevents incorporation of the multiple copies of C9 required for complete formation of the osmolytic pore. Its function is as follows. The soluble form from urine retains its specific complement binding activity, but exhibits greatly reduced ability to inhibit complement membrane attack complex (MAC) assembly on cell membranes. This chain is CD59 glycoprotein, found in Homo sapiens (Human).